Consider the following 663-residue polypeptide: Rap1 GTPase-activating protein 1 (663 aa).

A GoLoco domain is found at 1 to 17 (MIEKMQGSRMDEQRCSF). Positions 1 to 23 (MIEKMQGSRMDEQRCSFPPPLKT) are disordered. Phosphoserine is present on Phe-17. The Rap-GAP domain occupies 181–397 (IVTFDEHVIS…RTRAALLETL (217 aa)). At Ser-441 the chain carries Phosphoserine. Disordered regions lie at residues 442-604 (MDAM…PHKR) and 616-645 (SVST…PACP). Positions 450–465 (KKPNTVSTSHSGSFAP) are enriched in polar residues. Residues Ser-484, Ser-499, Ser-515, Ser-541, and Ser-542 each carry the phosphoserine modification. A compositionally biased stretch (polar residues) spans 535–549 (ENSSTQSSPEMPTTK). A compositionally biased stretch (low complexity) spans 567–579 (RSSSSASSFASVV). Positions 580–591 (EETEGVDGEDTG) are enriched in acidic residues. Positions 616 to 630 (SVSTTSGGSSPGPSR) are enriched in low complexity.

In terms of assembly, homodimer and heterodimer with RAP1B. In terms of tissue distribution, significant expression seen in the brain, kidney and pancreas. Abundant in the cerebral cortex and expressed at much lower levels in the spinal cord. Not detected in the lymphoid tissues.

The protein resides in the golgi apparatus membrane. In terms of biological role, GTPase activator for the nuclear Ras-related regulatory protein RAP-1A (KREV-1), converting it to the putatively inactive GDP-bound state. This is Rap1 GTPase-activating protein 1 (RAP1GAP) from Homo sapiens (Human).